A 145-amino-acid chain; its full sequence is Large ribosomal subunit protein bL35c (145 aa).

Residues 1–56 (MASLSMASVNVSFCHPLRSSSPKVSLRSSVHFATSLSSSHSISGLRAVLPLKISTV) constitute a chloroplast transit peptide.

The protein belongs to the bacterial ribosomal protein bL35 family. As to quaternary structure, part of the 50S ribosomal subunit.

It is found in the plastid. The protein resides in the chloroplast. This is Large ribosomal subunit protein bL35c from Arabidopsis thaliana (Mouse-ear cress).